Reading from the N-terminus, the 682-residue chain is Potassium-transporting ATPase ATP-binding subunit (682 aa).

Helical transmembrane passes span 34–54 (PVMF…LAMV), 58–78 (IAGS…TVLF), 219–239 (IALT…TATL), and 254–274 (VLVA…LSAI). The active-site 4-aspartylphosphate intermediate is Asp-307. ATP is bound by residues Asp-344, Glu-348, 377-384 (FTAQSRMS), and Lys-395. Mg(2+) contacts are provided by Asp-518 and Asp-522. 3 consecutive transmembrane segments (helical) span residues 588–608 (FAII…LNVM), 616–636 (AILS…PLAL), and 662–682 (LVVP…LGLA).

Belongs to the cation transport ATPase (P-type) (TC 3.A.3) family. Type IA subfamily. The system is composed of three essential subunits: KdpA, KdpB and KdpC.

The protein resides in the cell inner membrane. The catalysed reaction is K(+)(out) + ATP + H2O = K(+)(in) + ADP + phosphate + H(+). Functionally, part of the high-affinity ATP-driven potassium transport (or Kdp) system, which catalyzes the hydrolysis of ATP coupled with the electrogenic transport of potassium into the cytoplasm. This subunit is responsible for energy coupling to the transport system and for the release of the potassium ions to the cytoplasm. This is Potassium-transporting ATPase ATP-binding subunit from Salmonella typhimurium (strain LT2 / SGSC1412 / ATCC 700720).